The following is a 286-amino-acid chain: Putative transcription factor kapC (286 aa).

Over residues 1–10 (MQPALAPAPH) the composition is skewed to pro residues. The disordered stretch occupies residues 1–120 (MQPALAPAPH…QNRAAQRAFR (120 aa)). Low complexity predominate over residues 26–40 (HDQLLAAHQHLSHPQ). Pro residues predominate over residues 41–54 (QPRPQAPATQPPHM). Polar residues predominate over residues 55–67 (QPNTASPRDQNNI). Residues 81–92 (PQTPPQPEPAPQ) show a composition bias toward pro residues. In terms of domain architecture, bZIP spans 102-165 (PLSTSKRAAQ…EYIINLQTRL (64 aa)). The segment at 103 to 126 (LSTSKRAAQNRAAQRAFRQRKESY) is basic motif. The span at 108 to 118 (RAAQNRAAQRA) shows a compositional bias: low complexity. The tract at residues 130–161 (LEEQVKHQEAITEEYKALHAENYQLREYIINL) is leucine-zipper. Residues 197–286 (RGNAASAGPA…QEPDGLPVVS (90 aa)) are disordered. The span at 198–222 (GNAASAGPAPAGPGPQQSQPNQNQG) shows a compositional bias: low complexity.

The protein belongs to the bZIP family.

Its subcellular location is the nucleus. Its function is as follows. Putative transcription factor. This chain is Putative transcription factor kapC (kapC), found in Aspergillus terreus (strain NIH 2624 / FGSC A1156).